The primary structure comprises 93 residues: MTDVLEELSGIIAQRLREMPEGSYTASLAKKGKGYVARKVGEEAVEVVVASLSEGRERVVSETADLIYHLLVLLAMEGISLDEVRDELRRRMK.

Belongs to the PRA-PH family.

The protein localises to the cytoplasm. It carries out the reaction 1-(5-phospho-beta-D-ribosyl)-ATP + H2O = 1-(5-phospho-beta-D-ribosyl)-5'-AMP + diphosphate + H(+). The protein operates within amino-acid biosynthesis; L-histidine biosynthesis; L-histidine from 5-phospho-alpha-D-ribose 1-diphosphate: step 2/9. This is Phosphoribosyl-ATP pyrophosphatase from Metallosphaera sedula (strain ATCC 51363 / DSM 5348 / JCM 9185 / NBRC 15509 / TH2).